Consider the following 183-residue polypeptide: Mitochondrial inner membrane protease subunit 2 (183 aa).

Residues 13 to 35 traverse the membrane as a helical segment; that stretch reads AFVSGFFVAVPVTVTVLDRLAYV. Catalysis depends on residues S42 and K90. A disordered region spans residues 161–183; the sequence is SVPPDRRPLLNWDRAAEDKYDDD. A compositionally biased stretch (basic and acidic residues) spans 164-183; the sequence is PDRRPLLNWDRAAEDKYDDD.

It belongs to the peptidase S26 family. IMP2 subfamily. In terms of assembly, heterodimer of 2 subunits, IMMPL1 and IMMPL2.

Its subcellular location is the mitochondrion inner membrane. In terms of biological role, catalyzes the removal of transit peptides required for the targeting of proteins from the mitochondrial matrix, across the inner membrane, into the inter-membrane space. In Danio rerio (Zebrafish), this protein is Mitochondrial inner membrane protease subunit 2 (immp2l).